The following is a 189-amino-acid chain: Peroxiredoxin sll1621 (189 aa).

The region spanning 2–177 is the Thioredoxin domain; it reads TPERVPSVVF…MLAYLKGAEA (176 aa). Cysteine 55 functions as the Cysteine sulfenic acid (-SOH) intermediate (for peroxiredoxin activity) in the catalytic mechanism.

The protein belongs to the peroxiredoxin family. Prx5 subfamily. As to quaternary structure, monomer.

The enzyme catalyses a hydroperoxide + 2 glutathione = an alcohol + glutathione disulfide + H2O. Functionally, thiol-specific peroxidase that catalyzes the reduction of hydrogen peroxide and organic hydroperoxides to water and alcohols, respectively. Plays a role in cell protection against oxidative stress by detoxifying peroxides. The sequence is that of Peroxiredoxin sll1621 from Synechocystis sp. (strain ATCC 27184 / PCC 6803 / Kazusa).